The following is a 366-amino-acid chain: Peroxisomal (S)-2-hydroxy-acid oxidase GLO4 (366 aa).

The 360-residue stretch at 1 to 360 (MEDNLPVNVR…TRSHVMTEGD (360 aa)) folds into the FMN hydroxy acid dehydrogenase domain. Tyr27 provides a ligand contact to a 2-oxocarboxylate. FMN is bound by residues 80–82 (PTG), Ser109, 130–132 (QLY), and Thr158. A 2-oxocarboxylate is bound at residue Tyr132. Arg167 contributes to the a 2-oxocarboxylate binding site. FMN contacts are provided by Lys231 and Ser253. The active-site Proton acceptor is the His255. Arg258 contacts a 2-oxocarboxylate. Residues 286 to 290 (DGGIR) and 309 to 310 (XX) each bind FMN. The Microbody targeting signal motif lies at 364-366 (SLL).

This sequence belongs to the FMN-dependent alpha-hydroxy acid dehydrogenase family. In terms of assembly, homotetramer. It depends on FMN as a cofactor.

Its subcellular location is the peroxisome. The catalysed reaction is a (2S)-2-hydroxycarboxylate + O2 = a 2-oxocarboxylate + H2O2. The protein operates within lipid metabolism; fatty acid metabolism. Functionally, oxidase that catalyzes the oxidation of a broad range of 2-hydroxyacids to the corresponding 2-oxoacids, with a reduction of O2 to H2O2. May be involved in a general medium- and long-chain fatty acid catabolic pathway such as alpha-oxidation. In Oryza sativa subsp. indica (Rice), this protein is Peroxisomal (S)-2-hydroxy-acid oxidase GLO4 (GLO4).